The primary structure comprises 343 residues: Protein RecA (343 aa).

Residue 65 to 72 (GPESSGKT) coordinates ATP.

Belongs to the RecA family.

It is found in the cytoplasm. In terms of biological role, can catalyze the hydrolysis of ATP in the presence of single-stranded DNA, the ATP-dependent uptake of single-stranded DNA by duplex DNA, and the ATP-dependent hybridization of homologous single-stranded DNAs. It interacts with LexA causing its activation and leading to its autocatalytic cleavage. This chain is Protein RecA, found in Campylobacter jejuni subsp. doylei (strain ATCC BAA-1458 / RM4099 / 269.97).